Here is a 278-residue protein sequence, read N- to C-terminus: 2-dehydro-3-deoxyphosphooctonate aldolase (278 aa).

The protein belongs to the KdsA family.

It is found in the cytoplasm. It carries out the reaction D-arabinose 5-phosphate + phosphoenolpyruvate + H2O = 3-deoxy-alpha-D-manno-2-octulosonate-8-phosphate + phosphate. It functions in the pathway carbohydrate biosynthesis; 3-deoxy-D-manno-octulosonate biosynthesis; 3-deoxy-D-manno-octulosonate from D-ribulose 5-phosphate: step 2/3. Its pathway is bacterial outer membrane biogenesis; lipopolysaccharide biosynthesis. In Dechloromonas aromatica (strain RCB), this protein is 2-dehydro-3-deoxyphosphooctonate aldolase.